A 224-amino-acid polypeptide reads, in one-letter code: Leucyl/phenylalanyl-tRNA--protein transferase (224 aa).

Belongs to the L/F-transferase family.

The protein resides in the cytoplasm. The enzyme catalyses N-terminal L-lysyl-[protein] + L-leucyl-tRNA(Leu) = N-terminal L-leucyl-L-lysyl-[protein] + tRNA(Leu) + H(+). The catalysed reaction is N-terminal L-arginyl-[protein] + L-leucyl-tRNA(Leu) = N-terminal L-leucyl-L-arginyl-[protein] + tRNA(Leu) + H(+). It carries out the reaction L-phenylalanyl-tRNA(Phe) + an N-terminal L-alpha-aminoacyl-[protein] = an N-terminal L-phenylalanyl-L-alpha-aminoacyl-[protein] + tRNA(Phe). In terms of biological role, functions in the N-end rule pathway of protein degradation where it conjugates Leu, Phe and, less efficiently, Met from aminoacyl-tRNAs to the N-termini of proteins containing an N-terminal arginine or lysine. This Rhodopseudomonas palustris (strain HaA2) protein is Leucyl/phenylalanyl-tRNA--protein transferase.